We begin with the raw amino-acid sequence, 259 residues long: PF03932 family protein CutC (259 aa).

This sequence belongs to the CutC family. In terms of assembly, homodimer.

The protein resides in the cytoplasm. This chain is PF03932 family protein CutC, found in Salmonella typhi.